The following is a 105-amino-acid chain: UPF0235 protein Mchl_2407 (105 aa).

The protein belongs to the UPF0235 family.

The polypeptide is UPF0235 protein Mchl_2407 (Methylorubrum extorquens (strain CM4 / NCIMB 13688) (Methylobacterium extorquens)).